Reading from the N-terminus, the 618-residue chain is DNA ligase 2 (618 aa).

The segment covering Asp-197 to Lys-208 has biased composition (basic and acidic residues). Residues Asp-197–Ser-250 are disordered. Positions Pro-216–Val-234 are enriched in polar residues. Glu-312 is a binding site for ATP. Residue Lys-314 is the N6-AMP-lysine intermediate of the active site. 6 residues coordinate ATP: Arg-319, Arg-334, Glu-363, Phe-403, Arg-476, and Lys-482. The interval His-459–Trp-480 is disordered.

It belongs to the ATP-dependent DNA ligase family. Mg(2+) is required as a cofactor.

It catalyses the reaction ATP + (deoxyribonucleotide)n-3'-hydroxyl + 5'-phospho-(deoxyribonucleotide)m = (deoxyribonucleotide)n+m + AMP + diphosphate.. Functionally, DNA ligase that seals nicks in double-stranded DNA during DNA replication, DNA recombination and DNA repair. The sequence is that of DNA ligase 2 from Haloquadratum walsbyi (strain DSM 16790 / HBSQ001).